The chain runs to 524 residues: Putative ribose/galactose/methyl galactoside import ATP-binding protein 1 (524 aa).

ABC transporter domains follow at residues 29–270 and 280–524; these read LEMR…VGRT and VPIG…TGGH. 61-68 is a binding site for ATP; sequence GENGAGKS.

Belongs to the ABC transporter superfamily. Carbohydrate importer 2 (CUT2) (TC 3.A.1.2) family.

The protein resides in the cell inner membrane. The catalysed reaction is D-ribose(out) + ATP + H2O = D-ribose(in) + ADP + phosphate + H(+). The enzyme catalyses D-galactose(out) + ATP + H2O = D-galactose(in) + ADP + phosphate + H(+). In terms of biological role, part of an ABC transporter complex involved in carbohydrate import. Could be involved in ribose, galactose and/or methyl galactoside import. Responsible for energy coupling to the transport system. This chain is Putative ribose/galactose/methyl galactoside import ATP-binding protein 1, found in Rhizobium etli (strain ATCC 51251 / DSM 11541 / JCM 21823 / NBRC 15573 / CFN 42).